A 24-amino-acid chain; its full sequence is Caerulein precursor fragment B4 (24 aa).

In terms of tissue distribution, expressed by the skin glands.

Its subcellular location is the secreted. Functionally, has antibacterial and antifungal activity. In Xenopus borealis (Kenyan clawed frog), this protein is Caerulein precursor fragment B4.